The primary structure comprises 273 residues: Dermonecrotic toxin LspaSicTox-alphaIA2iv (273 aa).

The active site involves His-5. Positions 25 and 27 each coordinate Mg(2+). His-41 (nucleophile) is an active-site residue. 2 disulfide bridges follow: Cys-45-Cys-51 and Cys-47-Cys-190. Asp-85 contacts Mg(2+).

This sequence belongs to the arthropod phospholipase D family. Class II subfamily. Mg(2+) serves as cofactor. Expressed by the venom gland.

It is found in the secreted. The catalysed reaction is an N-(acyl)-sphingosylphosphocholine = an N-(acyl)-sphingosyl-1,3-cyclic phosphate + choline. The enzyme catalyses an N-(acyl)-sphingosylphosphoethanolamine = an N-(acyl)-sphingosyl-1,3-cyclic phosphate + ethanolamine. It carries out the reaction a 1-acyl-sn-glycero-3-phosphocholine = a 1-acyl-sn-glycero-2,3-cyclic phosphate + choline. It catalyses the reaction a 1-acyl-sn-glycero-3-phosphoethanolamine = a 1-acyl-sn-glycero-2,3-cyclic phosphate + ethanolamine. Functionally, dermonecrotic toxins cleave the phosphodiester linkage between the phosphate and headgroup of certain phospholipids (sphingolipid and lysolipid substrates), forming an alcohol (often choline) and a cyclic phosphate. This toxin acts on sphingomyelin (SM). It may also act on ceramide phosphoethanolamine (CPE), lysophosphatidylcholine (LPC) and lysophosphatidylethanolamine (LPE), but not on lysophosphatidylserine (LPS), and lysophosphatidylglycerol (LPG). It acts by transphosphatidylation, releasing exclusively cyclic phosphate products as second products. Induces dermonecrosis, hemolysis, increased vascular permeability, edema, inflammatory response, and platelet aggregation. This chain is Dermonecrotic toxin LspaSicTox-alphaIA2iv, found in Loxosceles spadicea (Recluse spider).